The following is a 671-amino-acid chain: MMDNQAVKSLLEMGIPHEVAVDALQRTGGNLEAAVNFIFSNELPEQAEMGEENDGSQPRISENKIVAGTKPCDVPNNGDQDIDMPDVSGVDVDYDDDEDITDERSGSNSTSGCRVTAQNYDRYSISETSIPPPSYSIVQHNEFKSNVGDPTVVLPLPLNSLIESYFGLFALLTAVYFPHVFLKPDFKDLNYRADWFKGSSFTEPKYRLAYCEAEDGSTTSEIVLASGPNEGLQPHLLWQLQKLISVVNTRKCERAFVSAKVFTSSLEPQLRSKLADSEHLYEVLPAFIKSLAVDLEMCPGIRDRETRSLFISSALHTPNKNEPPMETFLSLFHFLPEEYDSNLYKMFNVLLYPEEEEEEEDVIRGGEQEEARYVEPENTLKEVAPVLTILFNELETNTESVSLPNGVDIPLEFYPQLYTKQCKDQLIRHIISKRKQARTRSRCLLQEINELKSYQGKNISTILESTLAYLQTIPDDANNEAAKQIASLKDTLNSARAAKMEEYKDLASKLHGEWNLSHPETHIINTAKQLGLIENPYILTMAALSPYSYFIRSRNGAWSWIQSNTLGTEFKVKKCSSPSVVQEAIKHGTKYASETPLMFIYCEEGKIPTEEVVAEALKSNSGCLKFAEDDQNSLKTLRSQFFDGMGDPEQATNNINNGNDNDNDDDIDSDN.

Positions 1-41 constitute a UBA domain; that stretch reads MMDNQAVKSLLEMGIPHEVAVDALQRTGGNLEAAVNFIFSN. Ser56 bears the Phosphoserine mark. The tract at residues 68 to 87 is disordered; it reads GTKPCDVPNNGDQDIDMPDV. Residues 432-501 are a coiled coil; the sequence is SKRKQARTRS…LNSARAAKME (70 aa). The disordered stretch occupies residues 643-671; that stretch reads DGMGDPEQATNNINNGNDNDNDDDIDSDN. A compositionally biased stretch (acidic residues) spans 661-671; it reads NDNDDDIDSDN.

As to quaternary structure, forms a ternary complex with RSP5 and UBP2.

It is found in the cytoplasm. The protein localises to the nucleus. In terms of biological role, modulates the activity of the RSP5 HECT ubiquitin-protein ligase through its mediation of the interaction between RSP5 and the deubiquitinase UBP2. Involved in regulation of cell wall homeostasis. In Saccharomyces cerevisiae (strain ATCC 204508 / S288c) (Baker's yeast), this protein is UBA domain-containing protein RUP1 (RUP1).